Reading from the N-terminus, the 76-residue chain is Large ribosomal subunit protein eL38 (76 aa).

Belongs to the eukaryotic ribosomal protein eL38 family.

This chain is Large ribosomal subunit protein eL38 (RpL38), found in Lysiphlebus testaceipes (Greenbugs aphid parastoid).